Reading from the N-terminus, the 441-residue chain is Probable xylan O-acetyltransferase 10 (441 aa).

Over 1-19 the chain is Cytoplasmic; it reads MMKPQHGGMAGHGGGRTRS. The chain crosses the membrane as a helical; Signal-anchor for type II membrane protein span at residues 20-40; it reads PFLTSYALTLAFITFVSVLYF. Residues 41 to 441 are Lumenal-facing; that stretch reads KDFSSTLHQP…ELLYSKLFFP (401 aa). Residues 50 to 81 are disordered; sequence PFLTRPPPHRRQIARPRAPSHHHGGGSSSGGG. The span at 56-73 shows a compositional bias: basic residues; it reads PPHRRQIARPRAPSHHHG. Cystine bridges form between Cys-97-Cys-148, Cys-119-Cys-184, Cys-128-Cys-422, and Cys-341-Cys-418. Asn-154 is a glycosylation site (N-linked (GlcNAc...) asparagine). The GDS motif signature appears at 171-173; it reads GDS. Residue Ser-173 is the Nucleophile of the active site. N-linked (GlcNAc...) asparagine glycans are attached at residues Asn-212, Asn-343, and Asn-381. Asp-417 (proton donor) is an active-site residue. The DXXH motif signature appears at 417–420; that stretch reads DCTH. Catalysis depends on His-420, which acts as the Proton acceptor.

Belongs to the PC-esterase family. TBL subfamily. In terms of tissue distribution, expressed in roots, leaves and stems.

Its subcellular location is the golgi apparatus membrane. Functionally, probable xylan acetyltransferase required for 2-O- and 3-O-monoacetylation of xylosyl residues in xylan. Possesses extremely low activity in vitro. The chain is Probable xylan O-acetyltransferase 10 from Oryza sativa subsp. japonica (Rice).